We begin with the raw amino-acid sequence, 446 residues long: RUN domain-containing protein 3A (446 aa).

The interaction with RAP2A stretch occupies residues 1–298; it reads METSFVQTTM…LQLQLEEAAA (298 aa). An RUN domain is found at 52–189; that stretch reads DDSSEEFVNF…IDFSFCLKGE (138 aa). Thr-215 is modified (phosphothreonine). The segment at 216 to 239 is disordered; it reads DEEERHSAESSTSEDNSPEHPYLP. Ser-232 bears the Phosphoserine mark. Residues 267–322 adopt a coiled-coil conformation; that stretch reads YLEELVRLRESQLKDLEAENRRLQLQLEEAAAQNQREKRELEGVILELQEQLTGLI. A compositionally biased stretch (polar residues) spans 372-384; the sequence is PLSAEASLSSDSQ. The segment at 372–404 is disordered; the sequence is PLSAEASLSSDSQRLGEGTRDEEPWGPIGKDPT. Phosphoserine is present on residues Ser-416 and Ser-419.

This sequence belongs to the RUNDC3 family. As to quaternary structure, interacts with the GTP-bound form of RAP2A.

Functionally, may act as an effector of RAP2A in neuronal cells. The sequence is that of RUN domain-containing protein 3A (RUNDC3A) from Pongo abelii (Sumatran orangutan).